The primary structure comprises 481 residues: Ankyrin repeat, SAM and basic leucine zipper domain-containing protein 1 (481 aa).

Positions 1–10 (MASGALRGLA) are enriched in low complexity. The tract at residues 1-23 (MASGALRGLAVAGGGESSDSEDD) is disordered. Residues S17, S18, and S20 each carry the phosphoserine modification. 6 ANK repeats span residues 45–74 (EKSETFKKALTTGDISLVQELLDSGISVDS), 78–107 (YGWTPLMYAASIANVELVRVLLNRGANASF), 110–144 (DKQTILITACSARGSEEQILKCVELLLSRNADPNI), 148–177 (RLMTPIMYAARDGHPQVVALLVAHGAEVNA), 181–210 (NGYTALTWAARQGHKNVVLKLLELGANKML), and 214–243 (DGKIPSEIAKRNKHLEIFNFLSLTLNPLEG). In terms of domain architecture, SAM spans 272–334 (SYTAFGDLEI…KILSALKELE (63 aa)).

As to quaternary structure, interacts with DDX4, PIWIL1, RANBP9 and TDRD1.

The protein resides in the cytoplasm. Plays a central role during spermatogenesis by repressing transposable elements and preventing their mobilization, which is essential for the germline integrity. Acts via the piRNA metabolic process, which mediates the repression of transposable elements during meiosis by forming complexes composed of piRNAs and Piwi proteins and governs the methylation and subsequent repression of transposons. Its association with pi-bodies suggests a participation in the primary piRNAs metabolic process. Required prior to the pachytene stage to facilitate the production of multiple types of piRNAs, including those associated with repeats involved in the regulation of retrotransposons. May act by mediating protein-protein interactions during germ cell maturation. The chain is Ankyrin repeat, SAM and basic leucine zipper domain-containing protein 1 (ASZ1) from Eulemur macaco macaco (Black lemur).